We begin with the raw amino-acid sequence, 193 residues long: Acyl carrier protein phosphodiesterase (193 aa).

It belongs to the AcpH family.

The catalysed reaction is holo-[ACP] + H2O = apo-[ACP] + (R)-4'-phosphopantetheine + H(+). Converts holo-ACP to apo-ACP by hydrolytic cleavage of the phosphopantetheine prosthetic group from ACP. This is Acyl carrier protein phosphodiesterase from Escherichia coli O6:H1 (strain CFT073 / ATCC 700928 / UPEC).